Reading from the N-terminus, the 189-residue chain is MEQIDKQKIADAVKVILEAVGENPDREGLIDTPMRVARMYEEVFAGLKKDPSVHFDTIFEEQHEELVLVKDIRFSSMCEHHLVPFFGVAHVAYLPQNGRVAGLSKLARVVDDVSRRPQLQERITTTVAEIMMEKLKPLGVMVIMEAEHMCMTIRGVNKPGTKTITSAVRGAFKNDDKLRSEVLALIKHN.

C78, H81, and C150 together coordinate Zn(2+).

Belongs to the GTP cyclohydrolase I family. As to quaternary structure, toroid-shaped homodecamer, composed of two pentamers of five dimers.

It catalyses the reaction GTP + H2O = 7,8-dihydroneopterin 3'-triphosphate + formate + H(+). It participates in cofactor biosynthesis; 7,8-dihydroneopterin triphosphate biosynthesis; 7,8-dihydroneopterin triphosphate from GTP: step 1/1. This chain is GTP cyclohydrolase 1, found in Listeria monocytogenes serovar 1/2a (strain ATCC BAA-679 / EGD-e).